Consider the following 135-residue polypeptide: ATP synthase epsilon chain (135 aa).

Belongs to the ATPase epsilon chain family. In terms of assembly, F-type ATPases have 2 components, CF(1) - the catalytic core - and CF(0) - the membrane proton channel. CF(1) has five subunits: alpha(3), beta(3), gamma(1), delta(1), epsilon(1). CF(0) has three main subunits: a, b and c.

Its subcellular location is the cell inner membrane. In terms of biological role, produces ATP from ADP in the presence of a proton gradient across the membrane. The polypeptide is ATP synthase epsilon chain (Rhizobium etli (strain ATCC 51251 / DSM 11541 / JCM 21823 / NBRC 15573 / CFN 42)).